We begin with the raw amino-acid sequence, 302 residues long: Probable WRKY transcription factor 40 (302 aa).

A DNA-binding region (WRKY) is located at residues 140-206 (DTTLVVKDGY…YEGEHNHPMP (67 aa)).

It belongs to the WRKY group III family.

Its subcellular location is the nucleus. Functionally, transcription factor. Interacts specifically with the W box (5'-(T)TGAC[CT]-3'), a frequently occurring elicitor-responsive cis-acting element. The sequence is that of Probable WRKY transcription factor 40 from Arabidopsis thaliana (Mouse-ear cress).